Reading from the N-terminus, the 276-residue chain is Rhamnulose-1-phosphate aldolase (276 aa).

Glutamate 117 is an active-site residue. Histidine 141, histidine 143, and histidine 212 together coordinate Zn(2+).

This sequence belongs to the aldolase class II family. RhaD subfamily. Homotetramer. The cofactor is Zn(2+).

It localises to the cytoplasm. It catalyses the reaction L-rhamnulose 1-phosphate = (S)-lactaldehyde + dihydroxyacetone phosphate. Its pathway is carbohydrate degradation; L-rhamnose degradation; glycerone phosphate from L-rhamnose: step 3/3. Functionally, catalyzes the reversible cleavage of L-rhamnulose-1-phosphate to dihydroxyacetone phosphate (DHAP) and L-lactaldehyde. The protein is Rhamnulose-1-phosphate aldolase of Klebsiella pneumoniae subsp. pneumoniae (strain ATCC 700721 / MGH 78578).